Consider the following 287-residue polypeptide: Putative daunorubicin C-13 ketoreductase DnrU (287 aa).

24–30 lines the NADP(+) pocket; it reads GATSGIG. Ser-149 lines the substrate pocket. Catalysis depends on Tyr-175, which acts as the Proton acceptor.

This sequence belongs to the short-chain dehydrogenases/reductases (SDR) family.

Its function is as follows. Could reduce the 13-carbonyl of daunorubicin to produce (13S)-13-dihydrodaunorubicin. Could also be able to reduce the 13-carbonyl of doxorubicin. This chain is Putative daunorubicin C-13 ketoreductase DnrU, found in Streptomyces sp. (strain C5).